Consider the following 447-residue polypeptide: Glutamyl-tRNA reductase (447 aa).

Substrate contacts are provided by residues 49–52, Ser-109, 114–116, and Gln-120; these read TCNR and EQQ. Cys-50 functions as the Nucleophile in the catalytic mechanism. 189 to 194 contributes to the NADP(+) binding site; that stretch reads GAGSMG.

The protein belongs to the glutamyl-tRNA reductase family. In terms of assembly, homodimer.

It carries out the reaction (S)-4-amino-5-oxopentanoate + tRNA(Glu) + NADP(+) = L-glutamyl-tRNA(Glu) + NADPH + H(+). The protein operates within porphyrin-containing compound metabolism; protoporphyrin-IX biosynthesis; 5-aminolevulinate from L-glutamyl-tRNA(Glu): step 1/2. In terms of biological role, catalyzes the NADPH-dependent reduction of glutamyl-tRNA(Glu) to glutamate 1-semialdehyde (GSA). The sequence is that of Glutamyl-tRNA reductase from Mycobacterium sp. (strain JLS).